A 438-amino-acid polypeptide reads, in one-letter code: Gamma-glutamyl phosphate reductase (438 aa).

It belongs to the gamma-glutamyl phosphate reductase family.

The protein localises to the cytoplasm. It catalyses the reaction L-glutamate 5-semialdehyde + phosphate + NADP(+) = L-glutamyl 5-phosphate + NADPH + H(+). Its pathway is amino-acid biosynthesis; L-proline biosynthesis; L-glutamate 5-semialdehyde from L-glutamate: step 2/2. Catalyzes the NADPH-dependent reduction of L-glutamate 5-phosphate into L-glutamate 5-semialdehyde and phosphate. The product spontaneously undergoes cyclization to form 1-pyrroline-5-carboxylate. This Prochlorococcus marinus (strain NATL2A) protein is Gamma-glutamyl phosphate reductase.